Consider the following 287-residue polypeptide: Ribosomal RNA small subunit methyltransferase A (287 aa).

Over residues 1 to 15 the composition is skewed to polar residues; it reads MSKTTFDAQSITNSL. Residues 1–20 are disordered; it reads MSKTTFDAQSITNSLRAAKH. Positions 29, 31, 56, 77, and 126 each coordinate S-adenosyl-L-methionine.

The protein belongs to the class I-like SAM-binding methyltransferase superfamily. rRNA adenine N(6)-methyltransferase family. RsmA subfamily.

The protein localises to the cytoplasm. It catalyses the reaction adenosine(1518)/adenosine(1519) in 16S rRNA + 4 S-adenosyl-L-methionine = N(6)-dimethyladenosine(1518)/N(6)-dimethyladenosine(1519) in 16S rRNA + 4 S-adenosyl-L-homocysteine + 4 H(+). Functionally, specifically dimethylates two adjacent adenosines (A1518 and A1519) in the loop of a conserved hairpin near the 3'-end of 16S rRNA in the 30S particle. May play a critical role in biogenesis of 30S subunits. The chain is Ribosomal RNA small subunit methyltransferase A from Psychrobacter cryohalolentis (strain ATCC BAA-1226 / DSM 17306 / VKM B-2378 / K5).